The primary structure comprises 58 residues: Large ribosomal subunit protein eL37 (58 aa).

Over residues 1–17 (MTGAGTPSQGKKNTTTH) the composition is skewed to polar residues. Positions 1–26 (MTGAGTPSQGKKNTTTHTKCRRCGEK) are disordered. Residues cysteine 20, cysteine 23, cysteine 35, and cysteine 38 each coordinate Zn(2+). A C4-type zinc finger spans residues 20–38 (CRRCGEKSYHTKKKVCSSC).

The protein belongs to the eukaryotic ribosomal protein eL37 family. Requires Zn(2+) as cofactor.

In terms of biological role, binds to the 23S rRNA. This chain is Large ribosomal subunit protein eL37, found in Halobacterium salinarum (strain ATCC 29341 / DSM 671 / R1).